Reading from the N-terminus, the 68-residue chain is Large ribosomal subunit protein bL31 (68 aa).

Residues C17, C19, C37, and C40 each contribute to the Zn(2+) site.

Belongs to the bacterial ribosomal protein bL31 family. Type A subfamily. In terms of assembly, part of the 50S ribosomal subunit. Zn(2+) is required as a cofactor.

Its function is as follows. Binds the 23S rRNA. The sequence is that of Large ribosomal subunit protein bL31 from Dehalococcoides mccartyi (strain ATCC BAA-2266 / KCTC 15142 / 195) (Dehalococcoides ethenogenes (strain 195)).